We begin with the raw amino-acid sequence, 679 residues long: Glycine--tRNA ligase beta subunit (679 aa).

Belongs to the class-II aminoacyl-tRNA synthetase family. In terms of assembly, tetramer of two alpha and two beta subunits.

The protein resides in the cytoplasm. The enzyme catalyses tRNA(Gly) + glycine + ATP = glycyl-tRNA(Gly) + AMP + diphosphate. In Thermodesulfovibrio yellowstonii (strain ATCC 51303 / DSM 11347 / YP87), this protein is Glycine--tRNA ligase beta subunit.